Reading from the N-terminus, the 891-residue chain is Protein kinase kin1 (891 aa).

The disordered stretch occupies residues glycine 65 to arginine 116. In terms of domain architecture, Protein kinase spans tyrosine 125–methionine 395. ATP is bound by residues isoleucine 131 to valine 139 and lysine 154. Aspartate 266 (proton acceptor) is an active-site residue. At threonine 528 the chain carries Phosphothreonine. Disordered stretches follow at residues threonine 528 to arginine 699, threonine 728 to leucine 747, and threonine 805 to asparagine 841. Low complexity-rich tracts occupy residues proline 529 to valine 538 and histidine 583 to arginine 603. Serine 535 and serine 536 each carry phosphoserine. Polar residues-rich tracts occupy residues lysine 612–serine 629, leucine 649–threonine 659, isoleucine 669–arginine 699, threonine 728–lysine 742, and tyrosine 820–tyrosine 829. Positions glycine 842–leucine 891 constitute a KA1 domain.

It belongs to the protein kinase superfamily. Ser/Thr protein kinase family.

Its subcellular location is the cytoplasm. The catalysed reaction is L-seryl-[protein] + ATP = O-phospho-L-seryl-[protein] + ADP + H(+). It carries out the reaction L-threonyl-[protein] + ATP = O-phospho-L-threonyl-[protein] + ADP + H(+). Its function is as follows. Has a role in establishing the characteristic rod cell shape. Important for cell polarity and is involved in directing growth to the cell ends. This is Protein kinase kin1 (kin1) from Schizosaccharomyces pombe (strain 972 / ATCC 24843) (Fission yeast).